The following is a 313-amino-acid chain: Intelectin-1 (313 aa).

The first 18 residues, 1–18 (MNQLSFLLFLIATTRGWS), serve as a signal peptide directing secretion. A Fibrinogen C-terminal domain is found at 32-255 (SSSPSLPRSC…AANALCAGMR (224 aa)). Residues C41 and C70 are joined by a disulfide bond. Ca(2+) is bound by residues H86, E87, D89, G92, G97, D98, and D133. Disulfide bonds link C94–C280, C199–C259, and C251–C265. An N-linked (GlcNAc...) asparagine glycan is attached at N163. N260, E262, E274, and D282 together coordinate Ca(2+). Residues 262–263 (EH) and E274 contribute to the a carbohydrate site. S298 carries the GPI-anchor amidated serine lipid modification. Residues 299-313 (SSREITEAAVLLFYR) constitute a propeptide that is removed on maturation.

Homotrimer; disulfide-linked. May interact with LTF. Post-translationally, N-glycosylated. Highly expressed in omental adipose tissue where it is found in stromal vascular cells but not in fat cells but is barely detectable in subcutaneous adipose tissue (at protein level). Highly expressed in the small intestine. Also found in the heart, testis, colon, salivary gland, skeletal muscle, pancreas and thyroid and, to a lesser degree, in the uterus, spleen, prostate, lymph node and thymus.

Its subcellular location is the cell membrane. It localises to the secreted. Its function is as follows. Lectin that specifically recognizes microbial carbohydrate chains in a calcium-dependent manner. Binds to microbial glycans that contain a terminal acyclic 1,2-diol moiety, including beta-linked D-galactofuranose (beta-Galf), D-phosphoglycerol-modified glycans, D-glycero-D-talo-oct-2-ulosonic acid (KO) and 3-deoxy-D-manno-oct-2-ulosonic acid (KDO). Binds to glycans from Gram-positive and Gram-negative bacteria, including K.pneumoniae, S.pneumoniae, Y.pestis, P.mirabilis and P.vulgaris. Does not bind human glycans. Probably plays a role in the defense system against microorganisms. May function as adipokine that has no effect on basal glucose uptake but enhances insulin-stimulated glucose uptake in adipocytes. Increases AKT phosphorylation in the absence and presence of insulin. May interact with lactoferrin/LTF and increase its uptake, and may thereby play a role in iron absorption. In Homo sapiens (Human), this protein is Intelectin-1 (ITLN1).